Consider the following 74-residue polypeptide: Small ribosomal subunit protein bS18 (74 aa).

The protein belongs to the bacterial ribosomal protein bS18 family. Part of the 30S ribosomal subunit. Forms a tight heterodimer with protein bS6.

Its function is as follows. Binds as a heterodimer with protein bS6 to the central domain of the 16S rRNA, where it helps stabilize the platform of the 30S subunit. The protein is Small ribosomal subunit protein bS18 of Zymomonas mobilis subsp. mobilis (strain ATCC 31821 / ZM4 / CP4).